A 259-amino-acid polypeptide reads, in one-letter code: Probable ABC transporter arginine-binding protein ArtJ (259 aa).

The first 25 residues, 1-25 (MIKQIGRFFRAFIFIMPLSLTSCES), serve as a signal peptide directing secretion. Asn38, Glu45, Ala96, Gly97, Ser99, Arg104, and Phe149 together coordinate L-arginine.

It belongs to the bacterial solute-binding protein 3 family.

It localises to the secreted. The protein resides in the cell surface. Probably part of an ABC transporter complex involved in arginine transport. Binds arginine. Interacts with host epithelial cells, suggesting a role in host-cell adhesion during infection. In Chlamydia pneumoniae (Chlamydophila pneumoniae), this protein is Probable ABC transporter arginine-binding protein ArtJ.